The following is a 327-amino-acid chain: Biotin synthase (327 aa).

Positions 49-282 (FNKDKIDLCS…NKVIRLCGGR (234 aa)) constitute a Radical SAM core domain. [4Fe-4S] cluster is bound by residues C67, C71, and C74. [2Fe-2S] cluster contacts are provided by S110, C142, C201, and R277.

This sequence belongs to the radical SAM superfamily. Biotin synthase family. In terms of assembly, homodimer. [4Fe-4S] cluster is required as a cofactor. The cofactor is [2Fe-2S] cluster.

The enzyme catalyses (4R,5S)-dethiobiotin + (sulfur carrier)-SH + 2 reduced [2Fe-2S]-[ferredoxin] + 2 S-adenosyl-L-methionine = (sulfur carrier)-H + biotin + 2 5'-deoxyadenosine + 2 L-methionine + 2 oxidized [2Fe-2S]-[ferredoxin]. Its pathway is cofactor biosynthesis; biotin biosynthesis; biotin from 7,8-diaminononanoate: step 2/2. Its function is as follows. Catalyzes the conversion of dethiobiotin (DTB) to biotin by the insertion of a sulfur atom into dethiobiotin via a radical-based mechanism. The polypeptide is Biotin synthase (Methanococcus maripaludis (strain C5 / ATCC BAA-1333)).